A 341-amino-acid polypeptide reads, in one-letter code: Ribose-phosphate pyrophosphokinase 5 (341 aa).

Residues Asp-152, His-154, and Asp-167 each coordinate Mg(2+).

The protein belongs to the ribose-phosphate pyrophosphokinase family.

Its subcellular location is the cytoplasm. The enzyme catalyses D-ribose 5-phosphate + ATP = 5-phospho-alpha-D-ribose 1-diphosphate + AMP + H(+). Its pathway is metabolic intermediate biosynthesis; 5-phospho-alpha-D-ribose 1-diphosphate biosynthesis; 5-phospho-alpha-D-ribose 1-diphosphate from D-ribose 5-phosphate (route I): step 1/1. Its function is as follows. 5-phosphoribose 1-diphosphate synthase involved in nucleotide, histidine, and tryptophan biosynthesis. Active in heteromultimeric complexes with other 5-phosphoribose 1-diphosphate synthases. This chain is Ribose-phosphate pyrophosphokinase 5, found in Schizosaccharomyces pombe (strain 972 / ATCC 24843) (Fission yeast).